Consider the following 160-residue polypeptide: uncharacterized protein (160 aa).

In terms of domain architecture, N-acetyltransferase spans 7 to 151 (LLINFKTLEE…NPYIWHPDMD (145 aa)).

This is an uncharacterized protein from Bacillus velezensis (strain DSM 23117 / BGSC 10A6 / LMG 26770 / FZB42) (Bacillus amyloliquefaciens subsp. plantarum).